Consider the following 727-residue polypeptide: DNA topoisomerase 3 (727 aa).

One can recognise a Toprim domain in the interval 3-136 (KTVVLAEKPS…LKRLWISSVT (134 aa)). Residues Glu-9 and Asp-105 each contribute to the Mg(2+) site. Positions 153-592 (FENLYHSAVA…EMKEYAKQTI (440 aa)) constitute a Topo IA-type catalytic domain. Residues 187-192 (SCGRVQ) form an interaction with DNA region. Tyr-310 serves as the catalytic O-(5'-phospho-DNA)-tyrosine intermediate. Positions 685-711 (RRAKDKNSKASKRDVHSYMKKQNKDEP) are enriched in basic and acidic residues. The tract at residues 685–713 (RRAKDKNSKASKRDVHSYMKKQNKDEPIN) is disordered.

The protein belongs to the type IA topoisomerase family. Mg(2+) is required as a cofactor.

It carries out the reaction ATP-independent breakage of single-stranded DNA, followed by passage and rejoining.. In terms of biological role, releases the supercoiling and torsional tension of DNA, which is introduced during the DNA replication and transcription, by transiently cleaving and rejoining one strand of the DNA duplex. Introduces a single-strand break via transesterification at a target site in duplex DNA. The scissile phosphodiester is attacked by the catalytic tyrosine of the enzyme, resulting in the formation of a DNA-(5'-phosphotyrosyl)-enzyme intermediate and the expulsion of a 3'-OH DNA strand. The free DNA strand then undergoes passage around the unbroken strand, thus removing DNA supercoils. Finally, in the religation step, the DNA 3'-OH attacks the covalent intermediate to expel the active-site tyrosine and restore the DNA phosphodiester backbone. The polypeptide is DNA topoisomerase 3 (Bacillus licheniformis (strain ATCC 14580 / DSM 13 / JCM 2505 / CCUG 7422 / NBRC 12200 / NCIMB 9375 / NCTC 10341 / NRRL NRS-1264 / Gibson 46)).